The sequence spans 317 residues: Transaldolase (317 aa).

K132 (schiff-base intermediate with substrate) is an active-site residue.

It belongs to the transaldolase family. Type 1 subfamily. As to quaternary structure, homodimer.

Its subcellular location is the cytoplasm. The enzyme catalyses D-sedoheptulose 7-phosphate + D-glyceraldehyde 3-phosphate = D-erythrose 4-phosphate + beta-D-fructose 6-phosphate. Its pathway is carbohydrate degradation; pentose phosphate pathway; D-glyceraldehyde 3-phosphate and beta-D-fructose 6-phosphate from D-ribose 5-phosphate and D-xylulose 5-phosphate (non-oxidative stage): step 2/3. Transaldolase is important for the balance of metabolites in the pentose-phosphate pathway. This is Transaldolase from Yersinia pseudotuberculosis serotype IB (strain PB1/+).